Consider the following 418-residue polypeptide: D-amino acid dehydrogenase (418 aa).

3-17 (VLVLGAGVVGTTSAW) provides a ligand contact to FAD.

Belongs to the DadA oxidoreductase family. The cofactor is FAD.

It carries out the reaction a D-alpha-amino acid + A + H2O = a 2-oxocarboxylate + AH2 + NH4(+). It functions in the pathway amino-acid degradation; D-alanine degradation; NH(3) and pyruvate from D-alanine: step 1/1. Functionally, oxidative deamination of D-amino acids. This chain is D-amino acid dehydrogenase, found in Dechloromonas aromatica (strain RCB).